We begin with the raw amino-acid sequence, 106 residues long: Urease subunit beta (106 aa).

The protein belongs to the urease beta subunit family. As to quaternary structure, heterotrimer of UreA (gamma), UreB (beta) and UreC (alpha) subunits. Three heterotrimers associate to form the active enzyme.

The protein resides in the cytoplasm. It carries out the reaction urea + 2 H2O + H(+) = hydrogencarbonate + 2 NH4(+). It functions in the pathway nitrogen metabolism; urea degradation; CO(2) and NH(3) from urea (urease route): step 1/1. This Acinetobacter baumannii (strain SDF) protein is Urease subunit beta.